The following is a 161-amino-acid chain: Bacterioferritin (161 aa).

The Ferritin-like diiron domain maps to 1-145 (MKGEPKVIER…TQLDLLAKIG (145 aa)). Glutamate 18 and glutamate 51 together coordinate Fe cation. Methionine 52 contacts heme b. Residues histidine 54, glutamate 94, glutamate 127, and histidine 130 each coordinate Fe cation.

It belongs to the bacterioferritin family. As to quaternary structure, homooligomer of 24 subunits, arranged as 12 dimers, that are packed together to form an approximately spherical molecule with a central cavity, in which large amounts of iron can be deposited. Heme b is required as a cofactor.

It carries out the reaction 4 Fe(2+) + O2 + 4 H(+) = 4 Fe(3+) + 2 H2O. It catalyses the reaction Fe(2+)(in) = Fe(2+)(out). Iron-storage protein, whose ferroxidase center binds Fe(2+), oxidizes it using dioxygen to Fe(3+), and participates in the subsequent Fe(3+) oxide mineral core formation within the central cavity of the BFR protein shell. The sequence is that of Bacterioferritin (bfr) from Brucella melitensis biotype 1 (strain ATCC 23456 / CCUG 17765 / NCTC 10094 / 16M).